We begin with the raw amino-acid sequence, 517 residues long: Cytochrome P450 monooxygenase bsc11 (517 aa).

Residues 16–33 (ALPLTCTGLIIIFAFYLS) traverse the membrane as a helical segment. Asn204 carries N-linked (GlcNAc...) asparagine glycosylation. Cys448 is a binding site for heme.

Belongs to the cytochrome P450 family. Heme is required as a cofactor.

The protein localises to the membrane. It participates in mycotoxin biosynthesis. In terms of biological role, cytochrome P450 monooxygenase; part of the gene cluster that mediates the biosynthesis of the diterpene glucoside brassicicene C. In the first step of the brassicicene C biosynthesis, the bifunctional diterpene synthase bsc8 that possesses both prenyl transferase and terpene cyclase activity, converts isopentenyl diphosphate and dimethylallyl diphosphate into geranylgeranyl diphosphate (GGDP) that is further converted into fusicocca-2,10(14)-diene, the first precursor for brassicicene C. Fusicocca-2,10(14)-diene is then substrate of cytochrome P450 monooxygenase bsc1 for hydroxylation at the C-8 position. Oxidation at C-16 position to aldehyde is then catalyzed by the cytochrome P450 monooyxygenase bsc7, yielding fusicocca-2,10(14)-diene-8-beta,16-diol. Follows the isomerization of the double bond and reduction of aldehyde to alcohol catalyzed by the short-chain dehydrogenase/reductase bsc3 to yield the diol compound fusicocca-1,10(14)-diene-8 beta,16-diol. The next step is the oxidation at the C-3 position of fusicocca-2,10(14)-diene-8-beta,16-diol catalyzed by the alpha-ketoglutarate dependent dioxygenase bsc9, to produce a triol compound. Methylation of the hydroxy group at position 16 is performed by the methyltransferase bsc6. 16-O-methylation is followed by oxidation at the C-13 position to ketone and an alkyl shift of the methyl group leads to brassicicene C. Although the probable acetyltransferase bsc4 is included in the gene cluster, no acetylation reactions are necessary for brassicicene C biosynthesis. However, the fact that brassicicene E, which is a structurally related compound having an acetoxy group at position 12, was previously isolated from another strain of A.brassicicola suggests that the ATCC 96836 strain might also produce a small amount of brassicicene E. This chain is Cytochrome P450 monooxygenase bsc11, found in Alternaria brassicicola (Dark leaf spot agent).